The primary structure comprises 101 residues: NADH-quinone oxidoreductase subunit K (101 aa).

A run of 3 helical transmembrane segments spans residues 4–24 (LTHYLVLAAVMFAISVLGIFL), 30–50 (IVLLMAIELMLLAVNFNFIAF), and 61–81 (IFVFFVLTVAAAESAIGLAIL).

It belongs to the complex I subunit 4L family. In terms of assembly, NDH-1 is composed of 14 different subunits. Subunits NuoA, H, J, K, L, M, N constitute the membrane sector of the complex.

The protein localises to the cell inner membrane. The enzyme catalyses a quinone + NADH + 5 H(+)(in) = a quinol + NAD(+) + 4 H(+)(out). NDH-1 shuttles electrons from NADH, via FMN and iron-sulfur (Fe-S) centers, to quinones in the respiratory chain. The immediate electron acceptor for the enzyme in this species is believed to be ubiquinone. Couples the redox reaction to proton translocation (for every two electrons transferred, four hydrogen ions are translocated across the cytoplasmic membrane), and thus conserves the redox energy in a proton gradient. The polypeptide is NADH-quinone oxidoreductase subunit K (Laribacter hongkongensis (strain HLHK9)).